A 236-amino-acid chain; its full sequence is Purine nucleoside phosphorylase DeoD-type (236 aa).

Position 4 (His4) interacts with a purine D-ribonucleoside. Phosphate-binding positions include Gly20, Arg24, Arg43, and 87-90 (RVGT). A purine D-ribonucleoside is bound by residues 179 to 181 (EME) and 203 to 204 (SD). Residue Asp204 is the Proton donor of the active site.

The protein belongs to the PNP/UDP phosphorylase family. In terms of assembly, homohexamer; trimer of homodimers.

It carries out the reaction a purine D-ribonucleoside + phosphate = a purine nucleobase + alpha-D-ribose 1-phosphate. It catalyses the reaction a purine 2'-deoxy-D-ribonucleoside + phosphate = a purine nucleobase + 2-deoxy-alpha-D-ribose 1-phosphate. Its function is as follows. Catalyzes the reversible phosphorolytic breakdown of the N-glycosidic bond in the beta-(deoxy)ribonucleoside molecules, with the formation of the corresponding free purine bases and pentose-1-phosphate. The chain is Purine nucleoside phosphorylase DeoD-type from Streptococcus pneumoniae (strain JJA).